The following is a 511-amino-acid chain: MTIILKPGSVPLETLEKIYREGLPVRIDPAFHAGIEKAAARIAEIAAGDAPVYGINTGFGKLASIRIAAGDVATLQRNLILSHCCGVGEPLSENIVRLIMALKLVSLGRGASGVRLEVITLIEAMLEKGVIPMIPEKGSVGASGDLAPLAHMTAAMIGEGEAFYRGERLSGAKALGKAGLKPVVLAAKEGLALINGTQTSTALALAGLFRAHRAVRTALITGALSTDAAMGSDAPFHEEIHQLRGHKGQIDAGRALRTLLEGSAIRRSHLEGDQRVQDPYCIRCQPRVDGACLDILRQAARTLEIEANAVTDNPLVLSDGRAVSGGNFHAEPVAFAADQIALAVCEIGAISQRRIALLVDPSLSFGLPAFLTRKPGLNSGLMIAEVTSAALMSENKQMAHPASVDSTPTSANQEDHVSMACHGARRLLQMTANLNAIIGIEALTGALGVELRKPLTTSAELAKVIAALRAKVVTLEEDRYMADDLKAAAELVADGTLSGVISAGILPDLEA.

Residues 142–144 (ASG) constitute a cross-link (5-imidazolinone (Ala-Gly)). Residue Ser143 is modified to 2,3-didehydroalanine (Ser).

The protein belongs to the PAL/histidase family. Contains an active site 4-methylidene-imidazol-5-one (MIO), which is formed autocatalytically by cyclization and dehydration of residues Ala-Ser-Gly.

The protein localises to the cytoplasm. It catalyses the reaction L-histidine = trans-urocanate + NH4(+). The protein operates within amino-acid degradation; L-histidine degradation into L-glutamate; N-formimidoyl-L-glutamate from L-histidine: step 1/3. The sequence is that of Histidine ammonia-lyase from Brucella canis (strain ATCC 23365 / NCTC 10854 / RM-666).